A 197-amino-acid polypeptide reads, in one-letter code: Holliday junction branch migration complex subunit RuvA (197 aa).

The interval 1–64 is domain I; sequence MYEYIKGKYI…EDFIGVYGFL (64 aa). A domain II region spans residues 65–144; the sequence is TKDELSMFKL…DILEEDDEQI (80 aa). The tract at residues 145-149 is flexible linker; the sequence is INKVT. Residues 149–197 are domain III; sequence TDDKKVLEAVAALVTLGYSEKEANKVINSCDKNNSLEQIIKEALKYLMK.

This sequence belongs to the RuvA family. As to quaternary structure, homotetramer. Forms an RuvA(8)-RuvB(12)-Holliday junction (HJ) complex. HJ DNA is sandwiched between 2 RuvA tetramers; dsDNA enters through RuvA and exits via RuvB. An RuvB hexamer assembles on each DNA strand where it exits the tetramer. Each RuvB hexamer is contacted by two RuvA subunits (via domain III) on 2 adjacent RuvB subunits; this complex drives branch migration. In the full resolvosome a probable DNA-RuvA(4)-RuvB(12)-RuvC(2) complex forms which resolves the HJ.

It is found in the cytoplasm. In terms of biological role, the RuvA-RuvB-RuvC complex processes Holliday junction (HJ) DNA during genetic recombination and DNA repair, while the RuvA-RuvB complex plays an important role in the rescue of blocked DNA replication forks via replication fork reversal (RFR). RuvA specifically binds to HJ cruciform DNA, conferring on it an open structure. The RuvB hexamer acts as an ATP-dependent pump, pulling dsDNA into and through the RuvAB complex. HJ branch migration allows RuvC to scan DNA until it finds its consensus sequence, where it cleaves and resolves the cruciform DNA. The chain is Holliday junction branch migration complex subunit RuvA from Clostridium botulinum (strain Kyoto / Type A2).